The sequence spans 124 residues: SPbeta prophage-derived uncharacterized protein YoqO (124 aa).

The next 2 membrane-spanning stretches (helical) occupy residues 54 to 74 and 88 to 108; these read LVVI…LLSF and VIFI…ISIM.

Its subcellular location is the cell membrane. The polypeptide is SPbeta prophage-derived uncharacterized protein YoqO (yoqO) (Bacillus subtilis (strain 168)).